Consider the following 620-residue polypeptide: MAAATPTETPAPEGSGLGMDARLDQETAQWLRWDQNPLTSESVKQLIAGGNKEELRKCFGARMEFGTAGLRAPMGAGISRMNDLTIIQTTQGFCRYLEKQFSDLKQRGVVISFDARAHPASGGSSRRFARLAATAFITQGVPVYLFSDITPTPFVPYTVSHLKLCAGIMITASHNPKQDNGYKVYWDNGAQIISPHDRGISQAIEENLEPWPQAWEESLVDSSPLLHNPSASIGNDYFEDLKKYCFHRTVNKESKVKFVHTSVHGVGHEFVQLAFKAFDLAPPEAVPQQKDPDPEFPTVKYPNPEEGKGVLTLSFALADKIKAKIVLANDPDADRLAVAEKQDSGEWRVFSGNELGALLGWWLFTSWKEKNQDQSNLKDTYMLSSTVSSKILRAIALKEGFHFEETLTGFKWMGNRAQQLGDQGKTVLFAFEEAIGYMCCPFVLDKDGVSAAVICAELASFLATKNLSLSQQLNAIYVEYGYHITTASYFICHDQGTIQNLFGNLRNYDGKNNYPKMCGKFEISAIRDLTTGYDDSQPDKKAVLPTSKSSQMITFTFANGGVATMRTSGTEPKIKYYAELCAPPGNSDPEHLKKELDELVGAIEEHFFQPQKYNLQPKAE.

2 residues coordinate alpha-D-glucose 1,6-bisphosphate: Arg71 and Ser173. Ser173 functions as the Phosphoserine intermediate in the catalytic mechanism. 4 residues coordinate Mg(2+): Ser173, Asp330, Asp332, and Asp334. Ser173 is modified (phosphoserine). Alpha-D-glucose 1,6-bisphosphate-binding residues include Asp334, Arg335, Thr408, Glu432, and Lys446.

The protein belongs to the phosphohexose mutase family. Monomer. Mg(2+) serves as cofactor. In terms of tissue distribution, highly expressed in lung, spleen and thymus. Expressed at lower levels in liver, brain, kidney, skeletal muscle, testis and heart.

It localises to the cytoplasm. The protein localises to the cytosol. It catalyses the reaction alpha-D-ribose 1-phosphate = D-ribose 5-phosphate. It carries out the reaction 2-deoxy-alpha-D-ribose 1-phosphate = 2-deoxy-D-ribose 5-phosphate. The catalysed reaction is alpha-D-glucose 1-phosphate = alpha-D-glucose 6-phosphate. The enzyme catalyses O-phospho-L-seryl-[protein] + alpha-D-glucose 1-phosphate = alpha-D-glucose 1,6-bisphosphate + L-seryl-[protein]. It catalyses the reaction alpha-D-glucose 1,6-bisphosphate + L-seryl-[protein] = O-phospho-L-seryl-[protein] + alpha-D-glucose 6-phosphate. Catalyzes the conversion of the nucleoside breakdown products ribose-1-phosphate and deoxyribose-1-phosphate to the corresponding 5-phosphopentoses. Catalyzes the reversible isomerization of alpha-D-glucose 1-phosphate to alpha-D-glucose 6-phosphate but with a lower catalytic efficiency. The mechanism proceeds via the intermediate compound alpha-D-glucose 1,6-bisphosphate. In vitro, also has a low glucose 1,6-bisphosphate synthase activity which is most probably not physiologically relevant. In Mus musculus (Mouse), this protein is Phosphopentomutase.